Here is a 200-residue protein sequence, read N- to C-terminus: Probable UbiX-like flavin prenyltransferase (200 aa).

FMN contacts are provided by residues 9 to 11, serine 36, 87 to 90, and arginine 122; these read GAT and SMKT.

It belongs to the UbiX/PAD1 family. YclB subfamily. Homododecamer.

It catalyses the reaction dimethylallyl phosphate + FMNH2 = prenylated FMNH2 + phosphate. In terms of biological role, involved in the non-oxidative decarboxylation and detoxification of phenolic derivatives under both aerobic and anaerobic conditions. Flavin prenyltransferase that catalyzes the synthesis of the prenylated FMN cofactor (prenyl-FMN) for phenolic acid decarboxylase. The chain is Probable UbiX-like flavin prenyltransferase from Streptomyces sp. (strain D7).